We begin with the raw amino-acid sequence, 553 residues long: Glucagon-like peptide 2 receptor (553 aa).

Over 1–173 (MKLGSSRAGP…SFKQNVDRYA (173 aa)) the chain is Extracellular. Cystine bridges form between Cys83–Cys105, Cys96–Cys137, and Cys118–Cys159. N-linked (GlcNAc...) asparagine glycans are attached at residues Asn97, Asn113, Asn148, and Asn162. The chain crosses the membrane as a helical span at residues 174-198 (LLSTLQLMYTVGYSFSLISLFLALT). At 199-210 (LLLFLRKLHCTR) the chain is on the cytoplasmic side. A helical transmembrane segment spans residues 211–235 (NYIHMNLFASFILRTLAVLVKDVVF). The Extracellular segment spans residues 236 to 261 (YNSYSKRPDNENGWMSYLSEMSTSCR). The chain crosses the membrane as a helical span at residues 262–285 (SVQVLLHYFVGANYLWLLVEGLYL). The Cytoplasmic portion of the chain corresponds to 286–299 (HTLLEPTVLPERRL). A helical membrane pass occupies residues 300–321 (WPRYLLLGWAFPVLFVVPWGFA). Over 322 to 339 (RAHLENTGCWTTNGNKKI) the chain is Extracellular. A helical transmembrane segment spans residues 340–362 (WWIIRGPMMLCVTVNFFIFLKIL). At 363–386 (KLLISKLKAHQMCFRDYKYRLAKS) the chain is on the cytoplasmic side. A helical transmembrane segment spans residues 387–405 (TLVLIPLLGVHEILFSFIT). At 406–417 (DDQVEGFAKLIR) the chain is on the extracellular side. A helical membrane pass occupies residues 418-438 (LFIQLTLSSFHGFLVALQYGF). At 439 to 550 (ANGEVKAELR…ANTMEEILEE (112 aa)) the chain is on the cytoplasmic side.

Belongs to the G-protein coupled receptor 2 family.

It is found in the cell membrane. Its function is as follows. This is a receptor for glucagon-like peptide 2. The activity of this receptor is mediated by G proteins which activate adenylyl cyclase. This chain is Glucagon-like peptide 2 receptor (GLP2R), found in Homo sapiens (Human).